The following is a 275-amino-acid chain: Chemotaxis protein methyltransferase 1 (275 aa).

The region spanning Met1 to Lys275 is the CheR-type methyltransferase domain. Residues Asn76, Thr78, Arg82, Glu117, Asp145, Asn201–Leu202, and Arg218–Asn219 each bind S-adenosyl-L-methionine.

It carries out the reaction L-glutamyl-[protein] + S-adenosyl-L-methionine = [protein]-L-glutamate 5-O-methyl ester + S-adenosyl-L-homocysteine. Functionally, methylation of the membrane-bound methyl-accepting chemotaxis proteins (MCP) to form gamma-glutamyl methyl ester residues in MCP. In Vibrio cholerae serotype O1 (strain ATCC 39315 / El Tor Inaba N16961), this protein is Chemotaxis protein methyltransferase 1 (cheR1).